Here is a 265-residue protein sequence, read N- to C-terminus: Tryptophan synthase alpha chain (265 aa).

Residues Glu49 and Asp60 each act as proton acceptor in the active site.

Belongs to the TrpA family. As to quaternary structure, tetramer of two alpha and two beta chains.

It carries out the reaction (1S,2R)-1-C-(indol-3-yl)glycerol 3-phosphate + L-serine = D-glyceraldehyde 3-phosphate + L-tryptophan + H2O. Its pathway is amino-acid biosynthesis; L-tryptophan biosynthesis; L-tryptophan from chorismate: step 5/5. In terms of biological role, the alpha subunit is responsible for the aldol cleavage of indoleglycerol phosphate to indole and glyceraldehyde 3-phosphate. This chain is Tryptophan synthase alpha chain, found in Cupriavidus taiwanensis (strain DSM 17343 / BCRC 17206 / CCUG 44338 / CIP 107171 / LMG 19424 / R1) (Ralstonia taiwanensis (strain LMG 19424)).